We begin with the raw amino-acid sequence, 369 residues long: UPF0324 membrane protein DVU_0543 (369 aa).

The next 9 membrane-spanning stretches (helical) occupy residues 13 to 31 (IVPG…RTYV), 46 to 65 (WLVQ…TGMF), 110 to 132 (GGVA…MWLG), 142 to 164 (TATM…APGV), 171 to 193 (LALS…PFIG), 240 to 262 (WNVV…YWKG), 269 to 291 (TSLG…GMTA), 306 to 328 (LHLM…GAYI), and 341 to 363 (LRIG…LAFI).

This sequence belongs to the UPF0324 family.

It localises to the cell membrane. This chain is UPF0324 membrane protein DVU_0543, found in Nitratidesulfovibrio vulgaris (strain ATCC 29579 / DSM 644 / CCUG 34227 / NCIMB 8303 / VKM B-1760 / Hildenborough) (Desulfovibrio vulgaris).